The sequence spans 1179 residues: Integrin alpha-1 (1179 aa).

The first 28 residues, 1 to 28, serve as a signal peptide directing secretion; sequence MAPRPRARPGVAVACCWLLTVVLRCCVS. The Extracellular portion of the chain corresponds to 29–1141; the sequence is FNVDVKNSMT…SKDGLPGRVP (1113 aa). One copy of the FG-GAP 1 repeat lies at 30-91; it reads NVDVKNSMTF…CPVGRGESLP (62 aa). Asn-74 carries an N-linked (GlcNAc...) asparagine glycan. Cys-82 and Cys-92 are disulfide-bonded. 9 N-linked (GlcNAc...) asparagine glycosylation sites follow: Asn-100, Asn-105, Asn-112, Asn-217, Asn-317, Asn-341, Asn-402, Asn-418, and Asn-460. One copy of the FG-GAP 2 repeat lies at 101–160; sequence TSIPNVTEVKENMTFGSTLVTNPNGGFLACGPLYAYRCGHLHYTTGICSDVSPTFQVVNS. The 200-residue stretch at 161 to 360 folds into the VWFA domain; the sequence is IAPVQECSTQ…IVKTLGERIF (200 aa). The FG-GAP 3 repeat unit spans residues 365 to 417; sequence TADQSAASFEMEMSQTGFSAHYSQDWVMLGAVGAYDWNGTVVMQKASQIIIPR. FG-GAP repeat units follow at residues 422–475, 476–538, 557–615, and 619–679; these read NVES…DGNI, KILQ…RFEY, SCTT…TIRK, and QRIP…FEPN. Ca(2+) contacts are provided by Asp-498, Asp-500, Asp-502, and Asp-506. Residue Asn-532 is glycosylated (N-linked (GlcNAc...) asparagine). Positions 580, 582, 584, 588, 642, 644, 646, and 650 each coordinate Ca(2+). Cys-688 and Cys-697 form a disulfide bridge. Residues Asn-699, Asn-748, and Asn-780 are each glycosylated (N-linked (GlcNAc...) asparagine). Residues Cys-703 and Cys-756 are joined by a disulfide bond. Residues Cys-808 and Cys-814 are joined by a disulfide bond. 8 N-linked (GlcNAc...) asparagine glycosylation sites follow: Asn-840, Asn-883, Asn-908, Asn-915, Asn-939, Asn-966, Asn-974, and Asn-1008. A disulfide bridge connects residues Cys-878 and Cys-886. 2 cysteine pairs are disulfide-bonded: Cys-1030–Cys-1062 and Cys-1065–Cys-1072. Asn-1073, Asn-1083, Asn-1102, and Asn-1113 each carry an N-linked (GlcNAc...) asparagine glycan. The chain crosses the membrane as a helical span at residues 1142 to 1164; it reads LWVILLSAFAGLLLLMLLILALW. Residues 1165–1179 lie on the Cytoplasmic side of the membrane; that stretch reads KIGFFKRPLKKKMEK. The short motif at 1167–1171 is the GFFKR motif element; the sequence is GFFKR.

This sequence belongs to the integrin alpha chain family. As to quaternary structure, heterodimer of an alpha and a beta subunit. Alpha-1 associates with beta-1. Interacts with RAB21. Interacts (via cytoplasmic domain) with PTPN2; activates PTPN2 phosphatase activity towards EGFR and negatively regulates EGF signaling.

Its subcellular location is the membrane. Integrin alpha-1/beta-1 is a receptor for laminin and collagen. It recognizes the proline-hydroxylated sequence G-F-P-G-E-R in collagen. Involved in anchorage-dependent, negative regulation of EGF-stimulated cell growth. This Homo sapiens (Human) protein is Integrin alpha-1 (ITGA1).